We begin with the raw amino-acid sequence, 128 residues long: C-C motif chemokine 28 (128 aa).

The N-terminal stretch at 1-24 is a signal peptide; the sequence is MQQTGLTLALVALAVCVALPSSEA. Disulfide bonds link C32–C60 and C33–C75. The tract at residues 89-128 is disordered; it reads EQAAKKNTKGNICHKKQAGKRKSKGAHQEKPEIHSHKSPY. Basic residues predominate over residues 94-113; sequence KNTKGNICHKKQAGKRKSKG. Residues 114–128 show a composition bias toward basic and acidic residues; it reads AHQEKPEIHSHKSPY.

It belongs to the intercrine beta (chemokine CC) family.

The protein resides in the secreted. In terms of biological role, chemotactic activity for resting CD4, CD8 T-cells and eosinophils. Binds to CCR3 and CCR10 and induces calcium mobilization in a dose-dependent manner. The sequence is that of C-C motif chemokine 28 (CCL28) from Canis lupus familiaris (Dog).